Here is a 404-residue protein sequence, read N- to C-terminus: Probable tRNA sulfurtransferase (404 aa).

One can recognise a THUMP domain in the interval 61-166; it reads EAISERLKDV…SGYSYIMCGE (106 aa). ATP contacts are provided by residues 184–185, 209–210, arginine 266, glycine 288, and glutamine 297; these read LL and HF.

The protein belongs to the ThiI family.

Its subcellular location is the cytoplasm. The enzyme catalyses [ThiI sulfur-carrier protein]-S-sulfanyl-L-cysteine + a uridine in tRNA + 2 reduced [2Fe-2S]-[ferredoxin] + ATP + H(+) = [ThiI sulfur-carrier protein]-L-cysteine + a 4-thiouridine in tRNA + 2 oxidized [2Fe-2S]-[ferredoxin] + AMP + diphosphate. The catalysed reaction is [ThiS sulfur-carrier protein]-C-terminal Gly-Gly-AMP + S-sulfanyl-L-cysteinyl-[cysteine desulfurase] + AH2 = [ThiS sulfur-carrier protein]-C-terminal-Gly-aminoethanethioate + L-cysteinyl-[cysteine desulfurase] + A + AMP + 2 H(+). It functions in the pathway cofactor biosynthesis; thiamine diphosphate biosynthesis. In terms of biological role, catalyzes the ATP-dependent transfer of a sulfur to tRNA to produce 4-thiouridine in position 8 of tRNAs, which functions as a near-UV photosensor. Also catalyzes the transfer of sulfur to the sulfur carrier protein ThiS, forming ThiS-thiocarboxylate. This is a step in the synthesis of thiazole, in the thiamine biosynthesis pathway. The sulfur is donated as persulfide by IscS. The chain is Probable tRNA sulfurtransferase from Bacillus cereus (strain G9842).